Consider the following 284-residue polypeptide: Probable endonuclease 4 (284 aa).

Zn(2+) contacts are provided by His-69, His-113, Glu-148, Asp-182, His-185, His-217, Asp-230, His-232, and Glu-262.

The protein belongs to the AP endonuclease 2 family. Requires Zn(2+) as cofactor.

The catalysed reaction is Endonucleolytic cleavage to 5'-phosphooligonucleotide end-products.. Functionally, endonuclease IV plays a role in DNA repair. It cleaves phosphodiester bonds at apurinic or apyrimidinic (AP) sites, generating a 3'-hydroxyl group and a 5'-terminal sugar phosphate. The polypeptide is Probable endonuclease 4 (Bifidobacterium longum subsp. infantis (strain ATCC 15697 / DSM 20088 / JCM 1222 / NCTC 11817 / S12)).